The following is a 32-amino-acid chain: Photosystem II reaction center protein Z (32 aa).

The chain crosses the membrane as a helical span at residues 12-32; it reads IGSAAWAGLVLLVGTLNYLVI.

The protein belongs to the PsbZ family. As to quaternary structure, PSII is composed of 1 copy each of membrane proteins PsbA, PsbB, PsbC, PsbD, PsbE, PsbF, PsbH, PsbI, PsbJ, PsbK, PsbL, PsbM, PsbT, PsbY, PsbZ, Psb30/Ycf12, at least 3 peripheral proteins of the oxygen-evolving complex and a large number of cofactors. It forms dimeric complexes.

The protein resides in the plastid. It localises to the chloroplast thylakoid membrane. Functionally, may control the interaction of photosystem II (PSII) cores with the light-harvesting antenna, regulates electron flow through the 2 photosystem reaction centers. PSII is a light-driven water plastoquinone oxidoreductase, using light energy to abstract electrons from H(2)O, generating a proton gradient subsequently used for ATP formation. The chain is Photosystem II reaction center protein Z from Euglena anabaena (Euglenaria anabaena).